The primary structure comprises 599 residues: DNA-directed RNA polymerase III subunit RPC3 (599 aa).

Positions 350–375 (PKKRSASNGDDERPTKKIKTEDSDDI) are disordered. The segment covering 359-370 (DDERPTKKIKTE) has biased composition (basic and acidic residues). The leucine-zipper stretch occupies residues 528–549 (LIFSMAEILSNIQAFREDHKIL).

The protein belongs to the RNA polymerase beta chain family. As to quaternary structure, component of the RNA polymerase III (Pol III) complex consisting of 17 subunits.

It is found in the nucleus. Its function is as follows. DNA-dependent RNA polymerase catalyzes the transcription of DNA into RNA using the four ribonucleoside triphosphates as substrates. Specific core component of RNA polymerase III which synthesizes small RNAs, such as 5S rRNA and tRNAs. The chain is DNA-directed RNA polymerase III subunit RPC3 (RPC82) from Scheffersomyces stipitis (strain ATCC 58785 / CBS 6054 / NBRC 10063 / NRRL Y-11545) (Yeast).